A 1234-amino-acid chain; its full sequence is DNA-directed RNA polymerase subunit beta (1234 aa).

Residues 1169–1234 (ESVDEDADEL…LDLDDFGDEH (66 aa)) form a disordered region. Composition is skewed to acidic residues over residues 1171-1180 (VDEDADELEV) and 1191-1234 (EKEE…GDEH).

This sequence belongs to the RNA polymerase beta chain family. In terms of assembly, the RNAP catalytic core consists of 2 alpha, 1 beta, 1 beta' and 1 omega subunit. When a sigma factor is associated with the core the holoenzyme is formed, which can initiate transcription.

It catalyses the reaction RNA(n) + a ribonucleoside 5'-triphosphate = RNA(n+1) + diphosphate. Functionally, DNA-dependent RNA polymerase catalyzes the transcription of DNA into RNA using the four ribonucleoside triphosphates as substrates. This chain is DNA-directed RNA polymerase subunit beta, found in Clostridium botulinum (strain Langeland / NCTC 10281 / Type F).